The sequence spans 366 residues: Chorismate synthase (366 aa).

Arg-46 contacts NADP(+). FMN is bound by residues 122-124 (RSS), 243-244 (NG), Gly-284, 299-303 (KPTPS), and Arg-325.

This sequence belongs to the chorismate synthase family. Homotetramer. It depends on FMNH2 as a cofactor.

It catalyses the reaction 5-O-(1-carboxyvinyl)-3-phosphoshikimate = chorismate + phosphate. The protein operates within metabolic intermediate biosynthesis; chorismate biosynthesis; chorismate from D-erythrose 4-phosphate and phosphoenolpyruvate: step 7/7. Catalyzes the anti-1,4-elimination of the C-3 phosphate and the C-6 proR hydrogen from 5-enolpyruvylshikimate-3-phosphate (EPSP) to yield chorismate, which is the branch point compound that serves as the starting substrate for the three terminal pathways of aromatic amino acid biosynthesis. This reaction introduces a second double bond into the aromatic ring system. The protein is Chorismate synthase of Campylobacter hominis (strain ATCC BAA-381 / DSM 21671 / CCUG 45161 / LMG 19568 / NCTC 13146 / CH001A).